The following is an 87-amino-acid chain: Elastase inhibitor AFLEI (87 aa).

The signal sequence occupies residues 1-19 (MKFSLACLLALAGLQAALA). Cys-24 and Cys-86 are oxidised to a cystine.

It localises to the secreted. Elastase inhibitor. The sequence is that of Elastase inhibitor AFLEI from Aspergillus fumigatus (strain CBS 144.89 / FGSC A1163 / CEA10) (Neosartorya fumigata).